Here is a 455-residue protein sequence, read N- to C-terminus: Phosphoglucosamine mutase (455 aa).

Ser108 functions as the Phosphoserine intermediate in the catalytic mechanism. Mg(2+) contacts are provided by Ser108, Asp246, Asp248, and Asp250. Ser108 bears the Phosphoserine mark.

Belongs to the phosphohexose mutase family. Mg(2+) is required as a cofactor. In terms of processing, activated by phosphorylation.

The enzyme catalyses alpha-D-glucosamine 1-phosphate = D-glucosamine 6-phosphate. Catalyzes the conversion of glucosamine-6-phosphate to glucosamine-1-phosphate. The chain is Phosphoglucosamine mutase from Frankia alni (strain DSM 45986 / CECT 9034 / ACN14a).